A 125-amino-acid chain; its full sequence is Conopressin-conophysin, isoform 1 (125 aa).

A signal peptide spans 1 to 22 (MQMGRPTLLPCLLLLLVLSTQA). Cysteines 23 and 28 form a disulfide. A Glycine amide modification is found at Gly-31. A propeptide spanning residues 32–39 (GKRDVHMI) is cleaved from the precursor. 7 disulfides stabilise this stretch: Cys-45–Cys-85, Cys-48–Cys-59, Cys-53–Cys-75, Cys-60–Cys-65, Cys-92–Cys-112, Cys-104–Cys-124, and Cys-113–Cys-118.

This sequence belongs to the vasopressin/oxytocin family. In terms of tissue distribution, expressed by the venom gland.

It is found in the secreted. Targets vasopressin-oxytocin related receptors. The sequence is that of Conopressin-conophysin, isoform 1 from Conus monile (Necklace cone).